Reading from the N-terminus, the 423-residue chain is Protein IQ-DOMAIN 16 (423 aa).

IQ domains follow at residues 99 to 127 (RHWA…GIVK) and 128 to 150 (LQAL…CIKA). Residues 231 to 251 (QKKLEIAIKREKAQALALSNQ) are a coiled coil. Residues 235–252 (EIAIKREKAQALALSNQI) form a calmodulin-binding region.

Belongs to the IQD family. In terms of assembly, binds to multiple calmodulin (CaM) in the presence of Ca(2+) and CaM-like proteins.

It is found in the cytoplasm. The protein resides in the cytoskeleton. Its subcellular location is the cell membrane. May be involved in cooperative interactions with calmodulins or calmodulin-like proteins. Recruits calmodulin proteins to microtubules, thus being a potential scaffold in cellular signaling and trafficking. Regulates cell shape and elongation in aerial organs (i.e. cotyledons, leaves, and hypocotyls) probably by regulating cortical microtubules (MT) arrays orientation. May associate with nucleic acids and regulate gene expression at the transcriptional or post-transcriptional level. In Arabidopsis thaliana (Mouse-ear cress), this protein is Protein IQ-DOMAIN 16.